A 391-amino-acid polypeptide reads, in one-letter code: GATA-binding factor 6-B (391 aa).

Positions 57–69 (GTHSVNSHWSQAT) are enriched in polar residues. The tract at residues 57–107 (GTHSVNSHWSQATSESSSYSSSSPHPSSRYHYSPSPPMANGSTRDTGYSSS) is disordered. Residues 70–89 (SESSSYSSSSPHPSSRYHYS) show a composition bias toward low complexity. Over residues 96 to 107 (NGSTRDTGYSSS) the composition is skewed to polar residues. 2 consecutive GATA-type zinc fingers follow at residues 182–206 (CVNCGSVQTPLWRRDGTGHYLCNAC) and 236–260 (CANCHTTTTTLWRRNTEGEPVCNAC). Residues 277-334 (KEGIQTRKRKPKNLNKSKSSSSNGNSSHHITMTPTSTTSSTNSDDCIKNGSPSQNTAP) are disordered. A compositionally biased stretch (basic residues) spans 282 to 291 (TRKRKPKNLN). A compositionally biased stretch (low complexity) spans 292 to 319 (KSKSSSSNGNSSHHITMTPTSTTSSTNS).

In terms of tissue distribution, in embryos, expressed in the presumptive heart mesoderm. In adults, widely distributed but predominant in the heart.

It is found in the nucleus. Transcriptional activator that binds 5'-GATA-3'-containing motifs within gene promoters. Regulates cardiac-specific transcription during embryogenesis and thereby cardiogenesis. The sequence is that of GATA-binding factor 6-B (gata6-b) from Xenopus laevis (African clawed frog).